The following is an 81-amino-acid chain: Photosystem I iron-sulfur center (81 aa).

4Fe-4S ferredoxin-type domains follow at residues 2 to 31 (SHAV…MVPW) and 39 to 68 (IAAS…IRVY). Positions 11, 14, 17, 21, 48, 51, 54, and 58 each coordinate [4Fe-4S] cluster.

In terms of assembly, the cyanobacterial PSI reaction center is composed of one copy each of PsaA,B,C,D,E,F,I,J,K,L,M and X, and forms trimeric complexes. [4Fe-4S] cluster serves as cofactor.

It is found in the cellular thylakoid membrane. It carries out the reaction reduced [plastocyanin] + hnu + oxidized [2Fe-2S]-[ferredoxin] = oxidized [plastocyanin] + reduced [2Fe-2S]-[ferredoxin]. Functionally, apoprotein for the two 4Fe-4S centers FA and FB of photosystem I (PSI); essential for photochemical activity. FB is the terminal electron acceptor of PSI, donating electrons to ferredoxin. The C-terminus interacts with PsaA/B/D and helps assemble the protein into the PSI complex. Required for binding of PsaD and PsaE to PSI. PSI is a plastocyanin/cytochrome c6-ferredoxin oxidoreductase, converting photonic excitation into a charge separation, which transfers an electron from the donor P700 chlorophyll pair to the spectroscopically characterized acceptors A0, A1, FX, FA and FB in turn. The chain is Photosystem I iron-sulfur center from Prochlorococcus marinus (strain MIT 9303).